The sequence spans 517 residues: Crotonobetaine/carnitine--CoA ligase (517 aa).

Belongs to the ATP-dependent AMP-binding enzyme family.

The enzyme catalyses 4-(trimethylamino)butanoate + ATP + CoA = 4-(trimethylamino)butanoyl-CoA + AMP + diphosphate. It catalyses the reaction crotonobetaine + ATP + CoA = crotonobetainyl-CoA + AMP + diphosphate. It carries out the reaction (R)-carnitine + ATP + CoA = (R)-carnitinyl-CoA + AMP + diphosphate. It functions in the pathway amine and polyamine metabolism; carnitine metabolism. In terms of biological role, catalyzes the transfer of CoA to carnitine, generating the initial carnitinyl-CoA needed for the CaiB reaction cycle. Also has activity toward crotonobetaine and gamma-butyrobetaine. This Escherichia coli O9:H4 (strain HS) protein is Crotonobetaine/carnitine--CoA ligase.